A 282-amino-acid polypeptide reads, in one-letter code: Putative 4-diphosphocytidyl-2-C-methyl-D-erythritol kinase (282 aa).

The active site involves K9. 93 to 103 (PVSAGLAGGSA) contributes to the ATP binding site. D135 is an active-site residue.

Belongs to the GHMP kinase family. IspE subfamily.

It carries out the reaction 4-CDP-2-C-methyl-D-erythritol + ATP = 4-CDP-2-C-methyl-D-erythritol 2-phosphate + ADP + H(+). Catalyzes the phosphorylation of the position 2 hydroxy group of 4-diphosphocytidyl-2C-methyl-D-erythritol. The polypeptide is Putative 4-diphosphocytidyl-2-C-methyl-D-erythritol kinase (Staphylococcus aureus (strain bovine RF122 / ET3-1)).